The chain runs to 806 residues: Glycerol-3-phosphate acyltransferase (806 aa).

The HXXXXD motif signature appears at 305 to 310; the sequence is CHRSHM.

It belongs to the GPAT/DAPAT family.

It is found in the cell inner membrane. The catalysed reaction is sn-glycerol 3-phosphate + an acyl-CoA = a 1-acyl-sn-glycero-3-phosphate + CoA. It functions in the pathway phospholipid metabolism; CDP-diacylglycerol biosynthesis; CDP-diacylglycerol from sn-glycerol 3-phosphate: step 1/3. The polypeptide is Glycerol-3-phosphate acyltransferase (Salmonella agona (strain SL483)).